Here is a 283-residue protein sequence, read N- to C-terminus: Undecaprenyl-diphosphatase (283 aa).

7 helical membrane-spanning segments follow: residues 1–21, 40–60, 85–105, 117–137, 196–216, 232–252, and 258–278; these read MDII…FLPI, GAAF…IYFY, SRMG…GLLF, YIIS…EYLV, FSFL…LLKV, VATV…LDYL, and YLFI…LSMG.

Belongs to the UppP family.

It is found in the cell inner membrane. The enzyme catalyses di-trans,octa-cis-undecaprenyl diphosphate + H2O = di-trans,octa-cis-undecaprenyl phosphate + phosphate + H(+). Functionally, catalyzes the dephosphorylation of undecaprenyl diphosphate (UPP). Confers resistance to bacitracin. The protein is Undecaprenyl-diphosphatase of Chloroherpeton thalassium (strain ATCC 35110 / GB-78).